A 663-amino-acid polypeptide reads, in one-letter code: DNA topoisomerase 4 subunit B (663 aa).

Residues tyrosine 7, asparagine 47, aspartate 74, 114-120 (GLHGVGA), and lysine 341 contribute to the ATP site. The interval 386–416 (REAARKAREDARSGKKNKRKDTLLSGKLTPA) is disordered. A compositionally biased stretch (basic and acidic residues) spans 387-398 (EAARKAREDARS). The Toprim domain maps to 424-538 (NELYLVEGDS…AGRVFIALPP (115 aa)). Mg(2+)-binding residues include glutamate 430, aspartate 503, and aspartate 505.

The protein belongs to the type II topoisomerase family. ParE type 2 subfamily. As to quaternary structure, heterotetramer composed of ParC and ParE. It depends on Mg(2+) as a cofactor. Mn(2+) serves as cofactor. Ca(2+) is required as a cofactor.

It catalyses the reaction ATP-dependent breakage, passage and rejoining of double-stranded DNA.. Topoisomerase IV is essential for chromosome segregation. It relaxes supercoiled DNA. Performs the decatenation events required during the replication of a circular DNA molecule. The protein is DNA topoisomerase 4 subunit B of Staphylococcus aureus (strain Mu50 / ATCC 700699).